A 273-amino-acid chain; its full sequence is MAGYISDDTRKVTTHRLVEMKQRGERISMLTSYDYTMAQIVDGAGMDVILVGDSASNVMAGNVTTLPITLDQMIYHAKSVVRGVKRAMVVVDMPFGSYQGNEMEGLASAIRIMKESHADALKLEGGEEIIDTVKRIISAGIPVMGHLGLMPQSINKYGTYTVRAKDDSEAEKLIRDAHLLEEAGCFAIVLEKIPATLAERVASELTIPIIGIGAGGHVDGQVLVIQDMLGMNNGFRPRFLRRYADLYTVMTDAISRYVSDVKNCDFPNEKEQY.

2 residues coordinate Mg(2+): Asp53 and Asp92. Residues 53–54 (DS), Asp92, and Lys122 each bind 3-methyl-2-oxobutanoate. Residue Glu124 participates in Mg(2+) binding. Glu191 serves as the catalytic Proton acceptor.

The protein belongs to the PanB family. In terms of assembly, homodecamer; pentamer of dimers. The cofactor is Mg(2+).

The protein resides in the cytoplasm. It carries out the reaction 3-methyl-2-oxobutanoate + (6R)-5,10-methylene-5,6,7,8-tetrahydrofolate + H2O = 2-dehydropantoate + (6S)-5,6,7,8-tetrahydrofolate. The protein operates within cofactor biosynthesis; (R)-pantothenate biosynthesis; (R)-pantoate from 3-methyl-2-oxobutanoate: step 1/2. Functionally, catalyzes the reversible reaction in which hydroxymethyl group from 5,10-methylenetetrahydrofolate is transferred onto alpha-ketoisovalerate to form ketopantoate. The sequence is that of 3-methyl-2-oxobutanoate hydroxymethyltransferase from Bacteroides thetaiotaomicron (strain ATCC 29148 / DSM 2079 / JCM 5827 / CCUG 10774 / NCTC 10582 / VPI-5482 / E50).